A 332-amino-acid chain; its full sequence is Oligopeptide transport ATP-binding protein OppF (332 aa).

The ABC transporter domain occupies 23–264 (KNDKSLFFAK…TKHPYTKALM (242 aa)). 56–63 (GESGCGKS) lines the ATP pocket.

It belongs to the ABC transporter superfamily. As to quaternary structure, the complex is composed of two ATP-binding proteins (OppD and OppF), two transmembrane proteins (OppB and OppC) and a solute-binding protein (OppA).

It is found in the cell inner membrane. The enzyme catalyses a [peptide](out) + ATP + H2O = a [peptide](in) + ADP + phosphate + H(+). Functionally, part of the ABC transporter complex OppABCDF involved in the uptake of oligopeptides. Probably responsible for energy coupling to the transport system. This Haemophilus influenzae (strain ATCC 51907 / DSM 11121 / KW20 / Rd) protein is Oligopeptide transport ATP-binding protein OppF (oppF).